Here is a 350-residue protein sequence, read N- to C-terminus: Aminomethyltransferase (350 aa).

Belongs to the GcvT family. As to quaternary structure, the glycine cleavage system is composed of four proteins: P, T, L and H.

The enzyme catalyses N(6)-[(R)-S(8)-aminomethyldihydrolipoyl]-L-lysyl-[protein] + (6S)-5,6,7,8-tetrahydrofolate = N(6)-[(R)-dihydrolipoyl]-L-lysyl-[protein] + (6R)-5,10-methylene-5,6,7,8-tetrahydrofolate + NH4(+). In terms of biological role, the glycine cleavage system catalyzes the degradation of glycine. In Aquifex aeolicus (strain VF5), this protein is Aminomethyltransferase.